The primary structure comprises 924 residues: Alpha-actinin, sarcomeric (924 aa).

Residues 1-250 (MMMENGLSME…IMTYVSCYYH (250 aa)) form an actin-binding region. 2 Calponin-homology (CH) domains span residues 34-138 (KQQK…LRFA) and 147-253 (MTAK…HAFQ). Spectrin repeat units lie at residues 251 to 395 (AFQG…TVSD), 396 to 510 (ISNS…RCQR), 511 to 631 (ICDQ…TAND), and 632 to 744 (MTRK…TMET). EF-hand domains are found at residues 778 to 813 (EQLNEFRSSFNHFDKNRTGRLSPEEFKSCLVSLGYS) and 819 to 854 (QGDLDFQRILAVVDPNNTGYVHFDAFLDFMTRESTD). Ca(2+) contacts are provided by Asp-791, Asn-793, Thr-795, Arg-797, and Glu-802.

It belongs to the alpha-actinin family. In terms of assembly, homodimer; antiparallel. Interacts with Smn; the interaction occurs in adult thoracic tissues. As to expression, larval muscle isoform is expressed in the larval body wall, adult muscles of the head and abdomen and supercontractile muscles of the larva and adult. Adult muscle isoform accumulates within adult fibrillar and tubular muscles.

It localises to the cytoplasm. The protein resides in the myofibril. The protein localises to the sarcomere. Its subcellular location is the z line. Its function is as follows. F-actin cross-linking protein which is thought to anchor actin to a variety of intracellular structures. This is a bundling protein. The sequence is that of Alpha-actinin, sarcomeric (Actn) from Drosophila melanogaster (Fruit fly).